Reading from the N-terminus, the 156-residue chain is Ribosome maturation factor RimP (156 aa).

This sequence belongs to the RimP family.

It localises to the cytoplasm. In terms of biological role, required for maturation of 30S ribosomal subunits. The polypeptide is Ribosome maturation factor RimP (Prochlorococcus marinus (strain NATL1A)).